Reading from the N-terminus, the 616-residue chain is MASDGNGAAAVAALGISGGGGDDWAPPLRRNLPLLAPHEVKLAKLLLSEGQSHLFEHWPEPGVDDDKKRNFFDQVCRLNSSYPGGLASYIQNARKLLADSKAGKNPYDGFSPSVPSGEVLTFGDDNFVSLEEAGVKEARHAAFVLVAGGLGERLGYKGIKVALPRETTTGKCFLQHYIESILALQEASCKLVEGECNTKIPFVIMTSDDTNALTVKLLESNSYFGMEPSQVHILKQEKVACLADNDARLALDPNDKYKIQTKPHGHGDVHALLYSSGLLEQWKSTGRKWVLFFQDTNGLLFNAIPSALGVSATKGYNVNSLAVPRKAKEAIGGITKLTHVDGRTMVINVEYNQLDPLLRATGHPDGDANCETGYSPYPGNINQLILEIGPYMEELQKTHGAISEFVNPKYTDSTKTAFKSSTRLECMMQDYPKTLPPSAKVGFTVMDAWLAYAPVKNNPEDAAKVPKGNPYHSATSGEMAIYRANSLILRKAGAQIADPVIDTFNGQEVEVWPRITWIPRWGLIFKDVKAKVHSNSSVSQRSALVINGKNITIQGLSLDGTLIVNAKDEAKFNVTGHIENKGWTIQHVDHKDTSEKEEIRIRGFKFNKVEQLELNY.

Belongs to the USP family. Requires Mg(2+) as cofactor. It depends on Mn(2+) as a cofactor.

The enzyme catalyses a monosaccharide 1-phosphate + UTP + H(+) = a UDP-monosaccharide + diphosphate. Functionally, may function as the terminal enzyme of the myo-inositol oxidation (MIO) pathway. May also play a role in the salvage pathway for synthesis of nucleotide sugars. The polypeptide is UDP-sugar pyrophosphorylase (USP) (Oryza sativa subsp. indica (Rice)).